The chain runs to 596 residues: Inactive metallocarboxypeptidase ECM14 (596 aa).

The first 22 residues, 1-22, serve as a signal peptide directing secretion; that stretch reads MHFSVRLSLFLTLASSLPLVSA. Positions 23–184 are excised as a propeptide; sequence VPQHEDQAYT…QTIYESYPKA (162 aa). Residues 181–210 are disordered; the sequence is YPKAGSAPPSQQGPTTRRFSPSASTSKSKP. The segment covering 188–207 has biased composition (polar residues); sequence PPSQQGPTTRRFSPSASTSK. The 327-residue stretch at 220 to 546 folds into the Peptidase M14 domain; it reads DYQPLSVLLP…RAMVAMGKFL (327 aa). The Zn(2+) site is built by His-285 and Glu-288. Substrate contacts are provided by residues 285 to 288, Arg-343, and 360 to 361; these read HARE and DH. A disulfide bridge links Cys-354 with Cys-377. A glycan (N-linked (GlcNAc...) asparagine) is linked at Asn-370. Zn(2+) is bound at residue His-417. Position 418–419 (418–419) interacts with substrate; the sequence is SY. Positions 557–596 are disordered; sequence DGLRASEEPQDYDNDLEDGEDDKDEQDSTVFRAQADDLQS. Residues 564 to 583 show a composition bias toward acidic residues; it reads EPQDYDNDLEDGEDDKDEQD.

It belongs to the peptidase M14 family. Zn(2+) serves as cofactor.

The protein localises to the vacuole. Its subcellular location is the secreted. Its function is as follows. Inactive carboxypeptidase that may play a role in cell wall organization and biogenesis. In Trichophyton verrucosum (strain HKI 0517), this protein is Inactive metallocarboxypeptidase ECM14 (ECM14).